Consider the following 1029-residue polypeptide: Collagen, type I, alpha 1b (1029 aa).

The segment at 1-990 (QMSYVDHSKS…KAPDPFRGGH (990 aa)) is disordered. Over residues 13–33 (PPQPGPMGPMGPRGPPGPPGS) the composition is skewed to pro residues. The segment covering 34-57 (SGPQGFTGPPGEPGEPGASGAMGS) has biased composition (low complexity). Basic and acidic residues predominate over residues 67–81 (NGDDGEPGKPGRPGE). Low complexity-rich tracts occupy residues 82–91 (RGAAGPQGAR), 120–129 (VPGVMGARGR), and 136–147 (SGARGNDGNTGP). The segment covering 163 to 182 (PGGAGAKGETGPAGGRGNEG) has biased composition (gly residues). Low complexity-rich tracts occupy residues 199-223 (AGPA…AGLA), 233-267 (AQGA…PGPA), and 299-309 (ERGAPGARGFP). The span at 310 to 322 (GADGGAGGKGAPG) shows a compositional bias: gly residues. Composition is skewed to low complexity over residues 323–351 (ERGA…PGSK) and 429–465 (VGAP…QGAT). Residues 466–477 (GETGKGLGGPTG) show a composition bias toward gly residues. Positions 478 to 497 (PRGAPGPAGNDGAKGEPGAA) are enriched in low complexity. Gly residues-rich tracts occupy residues 498–507 (GAPGGLGAPG) and 531–540 (GGKGGDGAPG). Composition is skewed to low complexity over residues 571-580 (VAGPTGPRGA) and 593-620 (AGFA…KGDA). Composition is skewed to gly residues over residues 621–630 (GAPGPGGPVG) and 645–654 (GARGGAGPPG). Low complexity-rich tracts occupy residues 655-665 (ATGFPGPAGRV), 694-722 (ETGA…PGXD), 731-743 (PQGL…LPGQ), 830-839 (APGAVGPSGK), and 855-869 (SGPA…PAGA). Residues 870-884 (KGDRGEAGEAGDRGG) are compositionally biased toward basic and acidic residues. A compositionally biased stretch (low complexity) spans 906–934 (PAGASGPAGPRGPAGSNGAPGKDGMNGLP). The span at 952–967 (AGPPGPPGPAGPPGPP) shows a compositional bias: pro residues. Positions 999 to 1029 (TQKLPLLDLAPMDVGAPDQEFGVEVGPVCFL) constitute a Fibrillar collagen NC1 domain.

Belongs to the fibrillar collagen family.

The protein localises to the secreted. The protein resides in the extracellular space. It is found in the extracellular matrix. This Epinephelus aeneus (White grouper) protein is Collagen, type I, alpha 1b.